Reading from the N-terminus, the 274-residue chain is Merozoite surface protein 2 (274 aa).

The first 20 residues, 1 to 20 (MKVIKTLSIINFFIFVTFNI), serve as a signal peptide directing secretion. Residues Asn-22 and Asn-36 are each glycosylated (N-linked (GlcNAc...) asparagine). The interval 43-234 (MAESKPPTGT…SDSQKECTDG (192 aa)) is disordered. The polymorphic region stretch occupies residues 44–200 (AESKPPTGTG…EQTESPELQS (157 aa)). Repeat copies occupy residues 53–62 (GASGSAGSGA) and 63–72 (GASGSAGSGD). Positions 53-72 (GASGSAGSGAGASGSAGSGD) are 2 X 10 AA tandem repeats of G-A-S-G-S-A-G-S-G-[AD]. Gly residues predominate over residues 53–72 (GASGSAGSGAGASGSAGSGD). Over residues 91 to 121 (SSSTPATTTTTTTTTTTTTTNDAEASTSTSS) the composition is skewed to low complexity. Polar residues-rich tracts occupy residues 122–131 (ENPNHNNAET), 140–167 (QKSNQANKETQNNSNVQQDSQTKSNVPP), and 174–202 (KSPTAQPEQAENSAPTAEQTESPELQSAP). Residue Asn-151 is glycosylated (N-linked (GlcNAc...) asparagine). Asn-223 carries N-linked (GlcNAc...) asparagine glycosylation. Cys-231 and Cys-239 are oxidised to a cystine. Asn-248 is a glycosylation site (N-linked (GlcNAc...) asparagine). The GPI-anchor amidated asparagine moiety is linked to residue Asn-248. A propeptide spans 249-274 (SSNIASINKFVVLISAKLVLSFAIFI) (removed in mature form).

Its subcellular location is the cell membrane. Its function is as follows. May play a role in the merozoite attachment to the erythrocyte. This chain is Merozoite surface protein 2, found in Plasmodium falciparum (isolate kf1916).